Consider the following 83-residue polypeptide: UPF0297 protein CLK_1948 (83 aa).

The protein belongs to the UPF0297 family.

In Clostridium botulinum (strain Loch Maree / Type A3), this protein is UPF0297 protein CLK_1948.